Reading from the N-terminus, the 126-residue chain is Large ribosomal subunit protein uL22 (126 aa).

Belongs to the universal ribosomal protein uL22 family. As to quaternary structure, part of the 50S ribosomal subunit.

Its function is as follows. This protein binds specifically to 23S rRNA; its binding is stimulated by other ribosomal proteins, e.g. L4, L17, and L20. It is important during the early stages of 50S assembly. It makes multiple contacts with different domains of the 23S rRNA in the assembled 50S subunit and ribosome. In terms of biological role, the globular domain of the protein is located near the polypeptide exit tunnel on the outside of the subunit, while an extended beta-hairpin is found that lines the wall of the exit tunnel in the center of the 70S ribosome. The protein is Large ribosomal subunit protein uL22 of Caulobacter vibrioides (strain ATCC 19089 / CIP 103742 / CB 15) (Caulobacter crescentus).